The primary structure comprises 326 residues: Probable cell division protein WhiA (326 aa).

Positions 275–308 form a DNA-binding region, H-T-H motif; sequence SLEELGQLSDPPLTKDAVAGRIRRLLAMADKKAS.

This sequence belongs to the WhiA family.

Its function is as follows. Involved in cell division and chromosome segregation. This is Probable cell division protein WhiA from Beutenbergia cavernae (strain ATCC BAA-8 / DSM 12333 / CCUG 43141 / JCM 11478 / NBRC 16432 / NCIMB 13614 / HKI 0122).